The primary structure comprises 264 residues: Thymidylate synthase (264 aa).

DUMP is bound at residue Arg21. Residue His51 coordinates (6R)-5,10-methylene-5,6,7,8-tetrahydrofolate. 126–127 (RR) provides a ligand contact to dUMP. Cys146 serves as the catalytic Nucleophile. DUMP is bound by residues 166–169 (RSAD), Asn177, and 207–209 (HIY). Asp169 lines the (6R)-5,10-methylene-5,6,7,8-tetrahydrofolate pocket. Ala263 provides a ligand contact to (6R)-5,10-methylene-5,6,7,8-tetrahydrofolate.

This sequence belongs to the thymidylate synthase family. Bacterial-type ThyA subfamily. Homodimer.

The protein resides in the cytoplasm. The enzyme catalyses dUMP + (6R)-5,10-methylene-5,6,7,8-tetrahydrofolate = 7,8-dihydrofolate + dTMP. The protein operates within pyrimidine metabolism; dTTP biosynthesis. Its function is as follows. Catalyzes the reductive methylation of 2'-deoxyuridine-5'-monophosphate (dUMP) to 2'-deoxythymidine-5'-monophosphate (dTMP) while utilizing 5,10-methylenetetrahydrofolate (mTHF) as the methyl donor and reductant in the reaction, yielding dihydrofolate (DHF) as a by-product. This enzymatic reaction provides an intracellular de novo source of dTMP, an essential precursor for DNA biosynthesis. This is Thymidylate synthase from Brucella abortus (strain 2308).